The following is a 362-amino-acid chain: Hydroxycarboxylate dehydrogenase A (362 aa).

3 residues coordinate Zn(2+): D173, H257, and H274.

This sequence belongs to the iron-containing alcohol dehydrogenase family. Requires Zn(2+) as cofactor.

The enzyme catalyses 2-hydroxybutanoate + NADP(+) = 2-oxobutanoate + NADPH + H(+). It catalyses the reaction 2-hydroxyglutarate + NADP(+) = 2-oxoglutarate + NADPH + H(+). Catalyzes the NADPH-dependent reduction of 2-oxoglutarate and 2-oxobutanoate, leading to the respective 2-hydroxycarboxylate. Cannot use NADH instead of NADPH as a redox partner. Do not catalyze the reverse reactions. The sequence is that of Hydroxycarboxylate dehydrogenase A from Escherichia coli (strain K12).